We begin with the raw amino-acid sequence, 430 residues long: Long-chain specific acyl-CoA dehydrogenase, mitochondrial (430 aa).

A mitochondrion-targeting transit peptide spans 1 to 30; the sequence is MAARLLRGSLRFLGGHCAARPLPALRCSHS. K42 bears the N6-acetyllysine mark. Phosphoserine occurs at positions 54 and 55. N6-acetyllysine; alternate is present on residues K66 and K81. N6-succinyllysine; alternate is present on residues K66 and K81. N6-acetyllysine occurs at positions 92 and 95. K165 is subject to N6-succinyllysine. Residues 170–179 and 203–205 each bind FAD; these read IAMTELGAGS and FIS. S179 provides a ligand contact to substrate. Substrate is bound at residue 227–228; the sequence is AR. Position 240 is an N6-succinyllysine (K240). An N6-acetyllysine; alternate mark is found at K254 and K279. Residues K254 and K279 each carry the N6-succinyllysine; alternate modification. Residues Y282 and 289–292 contribute to the substrate site; that span reads PQER. E291 acts as the Proton acceptor in catalysis. R317 is a binding site for FAD. K318 carries the N6-acetyllysine modification. The residue at position 322 (K322) is an N6-acetyllysine; alternate. N6-succinyllysine; alternate is present on K322. Q328 provides a ligand contact to FAD. An N6-acetyllysine modification is found at K358. S362 is modified (phosphoserine). 385-389 lines the FAD pocket; it reads QLHGG. 412-413 lines the substrate pocket; sequence GG. Position 414 to 416 (414 to 416) interacts with FAD; that stretch reads TNE.

Belongs to the acyl-CoA dehydrogenase family. In terms of assembly, homotetramer. The cofactor is FAD. Acetylation at Lys-318 and Lys-322 in proximity of the cofactor-binding sites strongly reduces catalytic activity. These sites are deacetylated by SIRT3.

The protein localises to the mitochondrion matrix. The enzyme catalyses a long-chain 2,3-saturated fatty acyl-CoA + oxidized [electron-transfer flavoprotein] + H(+) = a long-chain (2E)-enoyl-CoA + reduced [electron-transfer flavoprotein]. It carries out the reaction hexanoyl-CoA + oxidized [electron-transfer flavoprotein] + H(+) = (2E)-hexenoyl-CoA + reduced [electron-transfer flavoprotein]. The catalysed reaction is octanoyl-CoA + oxidized [electron-transfer flavoprotein] + H(+) = (2E)-octenoyl-CoA + reduced [electron-transfer flavoprotein]. It catalyses the reaction decanoyl-CoA + oxidized [electron-transfer flavoprotein] + H(+) = (2E)-decenoyl-CoA + reduced [electron-transfer flavoprotein]. The enzyme catalyses dodecanoyl-CoA + oxidized [electron-transfer flavoprotein] + H(+) = (2E)-dodecenoyl-CoA + reduced [electron-transfer flavoprotein]. It carries out the reaction tetradecanoyl-CoA + oxidized [electron-transfer flavoprotein] + H(+) = (2E)-tetradecenoyl-CoA + reduced [electron-transfer flavoprotein]. The catalysed reaction is oxidized [electron-transfer flavoprotein] + hexadecanoyl-CoA + H(+) = (2E)-hexadecenoyl-CoA + reduced [electron-transfer flavoprotein]. It catalyses the reaction octadecanoyl-CoA + oxidized [electron-transfer flavoprotein] + H(+) = (2E)-octadecenoyl-CoA + reduced [electron-transfer flavoprotein]. The enzyme catalyses eicosanoyl-CoA + oxidized [electron-transfer flavoprotein] + H(+) = (2E)-eicosenoyl-CoA + reduced [electron-transfer flavoprotein]. It carries out the reaction docosanoyl-CoA + oxidized [electron-transfer flavoprotein] + H(+) = (2E)-docosenoyl-CoA + reduced [electron-transfer flavoprotein]. The catalysed reaction is tetracosanoyl-CoA + oxidized [electron-transfer flavoprotein] + H(+) = (2E)-tetracosenoyl-CoA + reduced [electron-transfer flavoprotein]. It catalyses the reaction (5E)-tetradecenoyl-CoA + oxidized [electron-transfer flavoprotein] + H(+) = (2E,5E)-tetradecadienoyl-CoA + reduced [electron-transfer flavoprotein]. The enzyme catalyses (5Z)-tetradecenoyl-CoA + oxidized [electron-transfer flavoprotein] + H(+) = (2E,5Z)-tetradecadienoyl-CoA + reduced [electron-transfer flavoprotein]. It carries out the reaction oxidized [electron-transfer flavoprotein] + (9Z)-octadecenoyl-CoA + H(+) = (2E,9Z)-octadecadienoyl-CoA + reduced [electron-transfer flavoprotein]. The protein operates within lipid metabolism; mitochondrial fatty acid beta-oxidation. Its function is as follows. Long-chain specific acyl-CoA dehydrogenase is one of the acyl-CoA dehydrogenases that catalyze the first step of mitochondrial fatty acid beta-oxidation, an aerobic process breaking down fatty acids into acetyl-CoA and allowing the production of energy from fats. The first step of fatty acid beta-oxidation consists in the removal of one hydrogen from C-2 and C-3 of the straight-chain fatty acyl-CoA thioester, resulting in the formation of trans-2-enoyl-CoA. Among the different mitochondrial acyl-CoA dehydrogenases, long-chain specific acyl-CoA dehydrogenase can act on saturated and unsaturated acyl-CoAs with 6 to 24 carbons with a preference for 8 to 18 carbons long primary chains. The sequence is that of Long-chain specific acyl-CoA dehydrogenase, mitochondrial from Macaca fascicularis (Crab-eating macaque).